The sequence spans 126 residues: Histone H2B 1.1 (126 aa).

Residues 1 to 12 (MPEPAKSAPAPK) show a composition bias toward low complexity. The segment at 1–35 (MPEPAKSAPAPKKGSKKAVTKTQKKDGKKRRKSRK) is disordered. N6-acetyllysine occurs at positions 6 and 13. Position 15 is a phosphoserine (Ser-15). N6-acetyllysine is present on residues Lys-16 and Lys-21. Residue Ser-113 is glycosylated (O-linked (GlcNAc) serine). A Glycyl lysine isopeptide (Lys-Gly) (interchain with G-Cter in ubiquitin) cross-link involves residue Lys-121.

Belongs to the histone H2B family. As to quaternary structure, the nucleosome is a histone octamer containing two molecules each of H2A, H2B, H3 and H4 assembled in one H3-H4 heterotetramer and two H2A-H2B heterodimers. The octamer wraps approximately 147 bp of DNA. Monoubiquitination of Lys-121 by BRE1 gives a specific tag for epigenetic transcriptional activation and is also prerequisite for histone H3 'Lys-4' and 'Lys-79' methylation. Post-translationally, phosphorylated on Ser-15 during developmentally programmed apoptosis; which may facilitate apoptotic chromatin condensation. In terms of processing, glcNAcylation at Ser-113 promotes monoubiquitination of Lys-121. It fluctuates in response to extracellular glucose, and associates with transcribed genes.

The protein localises to the nucleus. Its subcellular location is the chromosome. In terms of biological role, core component of nucleosome. Nucleosomes wrap and compact DNA into chromatin, limiting DNA accessibility to the cellular machineries which require DNA as a template. Histones thereby play a central role in transcription regulation, DNA repair, DNA replication and chromosomal stability. DNA accessibility is regulated via a complex set of post-translational modifications of histones, also called histone code, and nucleosome remodeling. The polypeptide is Histone H2B 1.1 (Xenopus laevis (African clawed frog)).